Here is a 308-residue protein sequence, read N- to C-terminus: MAPMVISDKDEMRKWSRSMRSQGKLIALVPTMGFLHEGHLSLVRDAHNHADLVAVSIYVNPGQFSPTEDLSAYPSDFQGDLQKLMSVPGGVDVVFHPHNLYDYGGDGGDAVAECGGDGVVSCVDRRSGFGHETWVRAEKLEKPLCGKSRPVFFRGVATIVTKLFNIVEPDVAVFGKKDYQQWKIIQRMVRDLDFSIKVIGSEVIREKDGLAMSSRNVYLSPEEREKAVSINKSLFRAKSAAEDGQIHCEKLINLVVQSITEAGGRIDYAEIVDQNNLEKVEWIKGPVVFCVSAWFGKARLIDNIEINL.

Position 2 (A2) is a propeptide, removed; partial.

It belongs to the pantothenate synthetase family. As to quaternary structure, homodimer. Expressed at low levels in leaf and root.

The protein resides in the cytoplasm. It catalyses the reaction (R)-pantoate + beta-alanine + ATP = (R)-pantothenate + AMP + diphosphate + H(+). It participates in cofactor biosynthesis; (R)-pantothenate biosynthesis; (R)-pantothenate from (R)-pantoate and beta-alanine: step 1/1. The polypeptide is Pantoate--beta-alanine ligase (PANC) (Lotus japonicus (Lotus corniculatus var. japonicus)).